Consider the following 196-residue polypeptide: GTP cyclohydrolase-2 (196 aa).

Residue 49–53 (RVHSE) participates in GTP binding. Zn(2+) contacts are provided by cysteine 54, cysteine 65, and cysteine 67. Residues glutamine 70, 92-94 (EGR), and threonine 114 contribute to the GTP site. Aspartate 126 acts as the Proton acceptor in catalysis. The Nucleophile role is filled by arginine 128. The GTP site is built by threonine 149 and lysine 154.

It belongs to the GTP cyclohydrolase II family. Homodimer. Requires Zn(2+) as cofactor.

The enzyme catalyses GTP + 4 H2O = 2,5-diamino-6-hydroxy-4-(5-phosphoribosylamino)-pyrimidine + formate + 2 phosphate + 3 H(+). It participates in cofactor biosynthesis; riboflavin biosynthesis; 5-amino-6-(D-ribitylamino)uracil from GTP: step 1/4. Catalyzes the conversion of GTP to 2,5-diamino-6-ribosylamino-4(3H)-pyrimidinone 5'-phosphate (DARP), formate and pyrophosphate. The polypeptide is GTP cyclohydrolase-2 (Citrobacter koseri (strain ATCC BAA-895 / CDC 4225-83 / SGSC4696)).